The sequence spans 525 residues: Mitoguardin (525 aa).

Residues 26–45 traverse the membrane as a helical segment; sequence VVLFSLTAGVALMSVLSRFL. Basic residues predominate over residues 47 to 67; sequence RRKPPRPPRRARKYTGRRNRN. Disordered regions lie at residues 47 to 73 and 210 to 239; these read RRKPPRPPRRARKYTGRRNRNSMRSPN and DEAEEEAGEADDDRRSRKSGSVLSRAGSDP. Residues 211–220 are compositionally biased toward acidic residues; it reads EAEEEAGEAD.

Belongs to the mitoguardin family. In terms of assembly, interacts with zuc.

It is found in the mitochondrion outer membrane. Its function is as follows. Regulator of mitochondrial fusion required to maintain neuronal homeostasis. This Drosophila melanogaster (Fruit fly) protein is Mitoguardin.